A 253-amino-acid chain; its full sequence is Triosephosphate isomerase (253 aa).

9–11 lines the substrate pocket; sequence NWK. The active-site Electrophile is His-95. Glu-167 (proton acceptor) is an active-site residue. Residues Gly-173, Ser-213, and 234-235 contribute to the substrate site; that span reads GG. Position 213 is a phosphoserine (Ser-213).

It belongs to the triosephosphate isomerase family. Homodimer.

It is found in the cytoplasm. The catalysed reaction is D-glyceraldehyde 3-phosphate = dihydroxyacetone phosphate. Its pathway is carbohydrate biosynthesis; gluconeogenesis. The protein operates within carbohydrate degradation; glycolysis; D-glyceraldehyde 3-phosphate from glycerone phosphate: step 1/1. Its function is as follows. Involved in the gluconeogenesis. Catalyzes stereospecifically the conversion of dihydroxyacetone phosphate (DHAP) to D-glyceraldehyde-3-phosphate (G3P). The sequence is that of Triosephosphate isomerase from Geobacillus kaustophilus (strain HTA426).